Consider the following 664-residue polypeptide: Exoribonuclease 2 (664 aa).

The RNB domain maps to 193–521 (RIDMTHIPFV…INHRMLKALI (329 aa)). In terms of domain architecture, S1 motif spans 568–650 (QTLFTGEIFD…ENRSLVAKPT (83 aa)).

It belongs to the RNR ribonuclease family. RNase II subfamily.

It is found in the cytoplasm. It catalyses the reaction Exonucleolytic cleavage in the 3'- to 5'-direction to yield nucleoside 5'-phosphates.. Involved in mRNA degradation. Hydrolyzes single-stranded polyribonucleotides processively in the 3' to 5' direction. The sequence is that of Exoribonuclease 2 from Vibrio vulnificus (strain CMCP6).